Consider the following 359-residue polypeptide: UDP-N-acetylglucosamine--N-acetylmuramyl-(pentapeptide) pyrophosphoryl-undecaprenol N-acetylglucosamine transferase (359 aa).

Residues 15 to 17, Asn127, Arg164, Ser192, Ile246, 265 to 270, and Gln290 contribute to the UDP-N-acetyl-alpha-D-glucosamine site; these read SGG and ALTVSE.

The protein belongs to the glycosyltransferase 28 family. MurG subfamily.

The protein localises to the cell membrane. The enzyme catalyses di-trans,octa-cis-undecaprenyl diphospho-N-acetyl-alpha-D-muramoyl-L-alanyl-D-glutamyl-meso-2,6-diaminopimeloyl-D-alanyl-D-alanine + UDP-N-acetyl-alpha-D-glucosamine = di-trans,octa-cis-undecaprenyl diphospho-[N-acetyl-alpha-D-glucosaminyl-(1-&gt;4)]-N-acetyl-alpha-D-muramoyl-L-alanyl-D-glutamyl-meso-2,6-diaminopimeloyl-D-alanyl-D-alanine + UDP + H(+). It participates in cell wall biogenesis; peptidoglycan biosynthesis. In terms of biological role, cell wall formation. Catalyzes the transfer of a GlcNAc subunit on undecaprenyl-pyrophosphoryl-MurNAc-pentapeptide (lipid intermediate I) to form undecaprenyl-pyrophosphoryl-MurNAc-(pentapeptide)GlcNAc (lipid intermediate II). In Wigglesworthia glossinidia brevipalpis, this protein is UDP-N-acetylglucosamine--N-acetylmuramyl-(pentapeptide) pyrophosphoryl-undecaprenol N-acetylglucosamine transferase.